The following is a 147-amino-acid chain: MLQEFKTFIMKGNVLDLAVGVIIGAAFGKIVNSAVNDLIMPVVGLALGKVDFSNLFISLKGGEYATVAAAKAAGAPTLNYGIFLNTTLDFLIMALVIFMIIKAANKVRKTEEPAPAPVPRECPFCKSAVHDEASRCPHCTSQLNATA.

2 helical membrane-spanning segments follow: residues 8-28 and 81-101; these read FIMK…AAFG and GIFL…FMII.

The protein belongs to the MscL family. Homopentamer.

It is found in the cell inner membrane. Functionally, channel that opens in response to stretch forces in the membrane lipid bilayer. May participate in the regulation of osmotic pressure changes within the cell. The protein is Large-conductance mechanosensitive channel of Trichlorobacter lovleyi (strain ATCC BAA-1151 / DSM 17278 / SZ) (Geobacter lovleyi).